Here is a 556-residue protein sequence, read N- to C-terminus: Membrane protein insertase YidC (556 aa).

Helical transmembrane passes span 6–26 (IVLYMALALIGLSLWNAWQID), 332–352 (LDLTVDYGILWFLSSLLFSLM), 358–378 (VVGNWGWSIVLVTVLIKLAFY), 428–448 (LGGCLPILIQIPVFIALYWVL), and 501–521 (VMMFLPILFTGLFWNFPSGLV).

The protein belongs to the OXA1/ALB3/YidC family. Type 1 subfamily. In terms of assembly, interacts with the Sec translocase complex via SecD. Specifically interacts with transmembrane segments of nascent integral membrane proteins during membrane integration.

It is found in the cell inner membrane. Functionally, required for the insertion and/or proper folding and/or complex formation of integral membrane proteins into the membrane. Involved in integration of membrane proteins that insert both dependently and independently of the Sec translocase complex, as well as at least some lipoproteins. Aids folding of multispanning membrane proteins. The polypeptide is Membrane protein insertase YidC (Legionella pneumophila (strain Paris)).